The primary structure comprises 263 residues: Chromosomal replication initiator protein DnaA (263 aa).

Residue aspartate 1 is a region of interest, domain I, interacts with DnaA modulators. A region of interest (domain II) is located at residue aspartate 1. A domain III, AAA+ region region spans residues 1–177 (DSGLGKTHLL…GIINKIEFSI (177 aa)). Residues glycine 3, glycine 5, lysine 6, and threonine 7 each coordinate ATP. Positions 178–263 (IQDNSAAPKI…KNYSEIGVAF (86 aa)) are domain IV, binds dsDNA.

Belongs to the DnaA family. In terms of assembly, oligomerizes as a right-handed, spiral filament on DNA at oriC.

The protein localises to the cytoplasm. Plays an essential role in the initiation and regulation of chromosomal replication. ATP-DnaA binds to the origin of replication (oriC) to initiate formation of the DNA replication initiation complex once per cell cycle. Binds the DnaA box (a 9 base pair repeat at the origin) and separates the double-stranded (ds)DNA. Forms a right-handed helical filament on oriC DNA; dsDNA binds to the exterior of the filament while single-stranded (ss)DNA is stabiized in the filament's interior. The ATP-DnaA-oriC complex binds and stabilizes one strand of the AT-rich DNA unwinding element (DUE), permitting loading of DNA polymerase. After initiation quickly degrades to an ADP-DnaA complex that is not apt for DNA replication. Binds acidic phospholipids. This chain is Chromosomal replication initiator protein DnaA, found in Spiroplasma apis.